Consider the following 246-residue polypeptide: MNFRAFLLAAIAGIATINATEVNRVNHDQVQPFAQPEPITDSQKSAVKYKPQLHISYGCHPYAAVQTDGSASGGLEWSGRVDGDCTGSQLGSQVYSRSDWYHDKWAIMYAWYFPKGRYHLGGHRHYWEYAIVWTDSPTSSNSSIQGVSMSAGVGYGKATPPMLKYIDGNSIKFDSHFSLLGNKAALQLTKEAGERQDLITWDQLTVAARDTLNGDALDGKAWFTDKDEVPFKDDIFVKRLQKAFPF.

The first 19 residues, 1-19 (MNFRAFLLAAIAGIATINA), serve as a signal peptide directing secretion. The short motif at 122 to 128 (GHRHYWE) is the Hepta-peptide GHRHDWE motif element. N141 carries an N-linked (GlcNAc...) asparagine glycan.

Belongs to the Necrosis inducing protein (NPP1) family.

It localises to the secreted. Functionally, secreted effector that contributes strongly to virulence during infection by P.capsici. Induces cell death in the Solanaceae, including Nicotiana benthamiana and hot pepper. This chain is NLP effector protein Pc118548, found in Phytophthora capsici.